A 1178-amino-acid chain; its full sequence is MGNTLTGRSNAIAPIISAEDAKTYISDEEYRRIRQAFQRFKNGCINYDEFCYHVLGGAQIPEEKRRLLFSFFSHGAETISFDNLLSSLVGLCRVEEVQSRFIEEYHEFASWGLSPPKLTIPLNDSYISFYEVMSYVTHLSVNEVIELEKVFATISDRAVCKLNEEKWKQALGGCFPDSYAERLFAVFDENRDGQIDFRELVCTLSALCRGPLPGRISQLARIWDVDCDKLLSDEELSNMYKDLNVPEEHQTVTKSSNGKSALVDFGIWAQENEKYVNEYYSMALQIGHICLGLRPESRKMELQIVNEFEKRASELPLSEWNIVASGWHAELRSFLEADKNPNPIDNSGIKGTREDSWTSKVACISAESARLKPDLIPSDYIRVPVPLWRAWLRWHGCALTVDSQFTRKYLDGEFFEDNKPALELYPLEILLLGHDRKKSQDGTENTPRSLTSWACAQVSRSMTVDELLALCKTELRLGDGDARLWQVVKENEEGNVLLDDGAQNLHQLYSSLGKTKKVNKMKLLLEVRERGTGVWPEELRASLSGKQITAASTLSSNAQLSDSSGRPGAVGLVNYGNFCYRNAGIQCLARVSPLTQYFLDEDNLDAIKRGNLRRGDAAETTIEYAKLLREMWAAKKKNIAPNDFNDAIRLSSDMFECSEQHDCQEFVAFLLDQLHTSMYESNKSLHPSPEESEGTDSNKLSDSSKKKEADKEEADEEKAERSWTEYEKQNESLVTQLFTGQLRSRLICRTCQSSSSVFEPFTSLSLPIGFEDVDLYQVIVVHRDGRIPRRYGFRLSRDSKVGNLREVVAVSSGISMSHLTIQCMSSKGTLMSRSPNHRSSNLRDELPLSSFPSGARLYALELPESTGEDQWRVAMHRKLQYNHEPYILGSTAGFIVSRFGLPLIVGLDEEVTGKKLYEDVMYQMHRFMEHSVNSSSSRAHDPCEDENSGYPFTLCLVDPNYEWCGQCPALRFCRGCPIRPDESKVFIPANCPIAVDWLPIALYLRYNHSQEQACEDDPSVAETWSRHFAPSSLEHCIEKFSCPETLDAAIQCDRCEKKTMRDKVMTIWKLPKYLIIHLKRFEFLREQGRMGKCKRTVNFPLKHFDPAPFVDKPDGNTYECIALANHYGQLSCGHFIAYAKSNEDKWLLLNDCSVREVSEEEVDKQGAYLLFYERKDVK.

EF-hand domains are found at residues 28-60 (EEYRRIRQAFQRFKNGCINYDEFCYHVLGGAQI), 175-210 (FPDSYAERLFAVFDENRDGQIDFRELVCTLSALCRG), and 211-246 (PLPGRISQLARIWDVDCDKLLSDEELSNMYKDLNVP). 9 residues coordinate Ca(2+): aspartate 188, asparagine 190, aspartate 192, glutamine 194, glutamate 199, aspartate 224, aspartate 226, aspartate 228, and glutamate 235. One can recognise a DUSP domain in the interval 296–410 (ESRKMELQIV…VDSQFTRKYL (115 aa)). Residues 570-1175 (VGLVNYGNFC…GAYLLFYERK (606 aa)) enclose the USP domain. Cysteine 579 serves as the catalytic Nucleophile. The disordered stretch occupies residues 681-725 (SNKSLHPSPEESEGTDSNKLSDSSKKKEADKEEADEEKAERSWTE). Residue histidine 1134 is the Proton acceptor of the active site.

This sequence belongs to the peptidase C19 family. As to expression, expressed in excretory cells, coelomocytes, head neurons, hypodermal cells, germ cells, oocytes, sperm and pharynx (at protein level).

Its subcellular location is the nucleus. The protein localises to the cytoplasm. It is found in the cytoskeleton. The protein resides in the microtubule organizing center. The catalysed reaction is Thiol-dependent hydrolysis of ester, thioester, amide, peptide and isopeptide bonds formed by the C-terminal Gly of ubiquitin (a 76-residue protein attached to proteins as an intracellular targeting signal).. Its function is as follows. Ubiquitin-protein hydrolase which cleaves ubiquitin from ubiquitinated proteins. Plays a role in embryo osmoregulation. Probably by regulating osmosis, controls actin redistribution in the 1-cell embryos and thus actin-dependent processes such as cytokinesis and P-granules segregation. During the first embryonic mitotic division, involved in the formation of a functional microtubule organizing center provided by the male pronucleus. Acts as a positive regulator of the mTORC1 signaling. In Caenorhabditis elegans, this protein is Ubiquitin carboxyl-terminal hydrolase cyk-3.